Consider the following 175-residue polypeptide: Mitochondrial inner membrane protease subunit 2 (175 aa).

A helical membrane pass occupies residues 19–37 (FFVAVPVAVTFLDRVACVA). Residues serine 43 and lysine 91 contribute to the active site.

It belongs to the peptidase S26 family. IMP2 subfamily. Heterodimer of 2 subunits, IMMPL1 and IMMPL2. Expressed in all tissues tested except adult liver and lung.

Its subcellular location is the mitochondrion inner membrane. Catalyzes the removal of transit peptides required for the targeting of proteins from the mitochondrial matrix, across the inner membrane, into the inter-membrane space. Known to process the nuclear encoded protein DIABLO. The chain is Mitochondrial inner membrane protease subunit 2 (IMMP2L) from Homo sapiens (Human).